A 413-amino-acid chain; its full sequence is Serine hydroxymethyltransferase (413 aa).

(6S)-5,6,7,8-tetrahydrofolate is bound by residues Leu119 and 123–125; that span reads GHL. The residue at position 228 (Lys228) is an N6-(pyridoxal phosphate)lysine. Residue 351–353 coordinates (6S)-5,6,7,8-tetrahydrofolate; that stretch reads SPF.

The protein belongs to the SHMT family. Homodimer. Pyridoxal 5'-phosphate serves as cofactor.

The protein resides in the cytoplasm. It carries out the reaction (6R)-5,10-methylene-5,6,7,8-tetrahydrofolate + glycine + H2O = (6S)-5,6,7,8-tetrahydrofolate + L-serine. Its pathway is one-carbon metabolism; tetrahydrofolate interconversion. It functions in the pathway amino-acid biosynthesis; glycine biosynthesis; glycine from L-serine: step 1/1. Its function is as follows. Catalyzes the reversible interconversion of serine and glycine with tetrahydrofolate (THF) serving as the one-carbon carrier. This reaction serves as the major source of one-carbon groups required for the biosynthesis of purines, thymidylate, methionine, and other important biomolecules. Also exhibits THF-independent aldolase activity toward beta-hydroxyamino acids, producing glycine and aldehydes, via a retro-aldol mechanism. This is Serine hydroxymethyltransferase from Clostridium botulinum (strain Langeland / NCTC 10281 / Type F).